Consider the following 307-residue polypeptide: Fe-S cluster assembly protein dre2 (307 aa).

2 disordered regions span residues 1-26 and 159-179; these read MTPVPVSVDTTADFAAPPTKTAPSTS and KKKKAPAPTEQPPVATGVGFV. Residues 15–26 show a composition bias toward low complexity; that stretch reads AAPPTKTAPSTS. The tract at residues 23 to 152 is N-terminal SAM-like domain; it reads PSTSTRTLLL…EKPAYQEAAV (130 aa). Residues 153 to 197 form a linker region; it reads PLRLGGKKKKAPAPTEQPPVATGVGFVDGNDELIDEDDLLSDDDL. 4 residues coordinate [2Fe-2S] cluster: Cys207, Cys219, Cys222, and Cys224. The fe-S binding site A stretch occupies residues 207 to 224; the sequence is CQPEKAKKRRRPCKDCTC. [4Fe-4S] cluster-binding residues include Cys270, Cys273, Cys281, and Cys284. 2 consecutive short sequence motifs (cx2C motif) follow at residues 270–273 and 281–284; these read CNSC and CSSC. The interval 270–284 is fe-S binding site B; it reads CNSCSLGDAFRCSSC.

It belongs to the anamorsin family. Monomer. Interacts with tah18. Interacts with mia40. The cofactor is [2Fe-2S] cluster. [4Fe-4S] cluster serves as cofactor.

Its subcellular location is the cytoplasm. The protein localises to the mitochondrion intermembrane space. Functionally, component of the cytosolic iron-sulfur (Fe-S) protein assembly (CIA) machinery required for the maturation of extramitochondrial Fe-S proteins. Part of an electron transfer chain functioning in an early step of cytosolic Fe-S biogenesis, facilitating the de novo assembly of a [4Fe-4S] cluster on the scaffold complex cfd1-nbp35. Electrons are transferred to dre2 from NADPH via the FAD- and FMN-containing protein tah18. Tah18-dre2 are also required for the assembly of the diferric tyrosyl radical cofactor of ribonucleotide reductase (RNR), probably by providing electrons for reduction during radical cofactor maturation in the catalytic small subunit rnr2. The protein is Fe-S cluster assembly protein dre2 of Aspergillus terreus (strain NIH 2624 / FGSC A1156).